A 507-amino-acid polypeptide reads, in one-letter code: Cytochrome P450 monooxygenase helB2 (507 aa).

Positions 1–22 are cleaved as a signal peptide; that stretch reads MALPIILCLAVILWTSWRLLDA. Cys-436 provides a ligand contact to heme.

This sequence belongs to the cytochrome P450 family. Heme serves as cofactor.

The protein operates within mycotoxin biosynthesis. Its function is as follows. Cytochrome P450 monooxygenase; part of the gene cluster that mediates the biosynthesis of helvolic acid, an antibacterial nortriterpenoid. Protostadienol synthase helA cyclizes (3S)-oxidosqualene to (17Z)-protosta-17(20),24-dien-3-beta-ol (protostadienol). The synthesis of protostadienol is followed by several steps of monooxygenation, dehydrogenation, and acyl transfer to yield the final helvolic acid. Following the cyclization to the tetracyclic protostadienol by helA, cytochrome P450 monooxygenases helB1-mediated and helB2-mediated oxidation at C-4 and C-16, acyltransferase helD2-dependent acetylation of 16-OH, oxidation of C-21 by cytochrome P450 monooxygenase helB4, and short chain dehydrogenase helC-dependent oxidative decarboxylation yield the fusidane skeleton. This intermediate is further modified in three additional steps mediated by the cytochrome P450 monooxygenase helB3, the acyltransferase helD1, and the 3-ketosteroid 1-dehydrogenase helE to give helvolic acid. Compared with the late stages in the biosynthesis of helvolic acid, enzymes involved in the early stage modifications act in a relatively strict order. The hydroxylation of C-16 by helB1 and subsequent acetylation by helD2 should occur before the helB3-mediated oxidation of C-21. C-4 demethylation in fusidane-type antibiotics proceeds in an unusual manner though it is also achieved by oxidative decarboxylation. The methyl group at C-4 beta position is oxidized by helB1 and subsequently removed by the short chain dehydrogenase helC. The sequence is that of Cytochrome P450 monooxygenase helB2 from Aspergillus fumigatus (strain ATCC MYA-4609 / CBS 101355 / FGSC A1100 / Af293) (Neosartorya fumigata).